Consider the following 89-residue polypeptide: Small ribosomal subunit protein uS15 (89 aa).

Belongs to the universal ribosomal protein uS15 family. Part of the 30S ribosomal subunit. Forms a bridge to the 50S subunit in the 70S ribosome, contacting the 23S rRNA.

Functionally, one of the primary rRNA binding proteins, it binds directly to 16S rRNA where it helps nucleate assembly of the platform of the 30S subunit by binding and bridging several RNA helices of the 16S rRNA. In terms of biological role, forms an intersubunit bridge (bridge B4) with the 23S rRNA of the 50S subunit in the ribosome. This is Small ribosomal subunit protein uS15 from Methylorubrum populi (strain ATCC BAA-705 / NCIMB 13946 / BJ001) (Methylobacterium populi).